Reading from the N-terminus, the 127-residue chain is S-adenosylmethionine decarboxylase proenzyme (127 aa).

The Schiff-base intermediate with substrate; via pyruvic acid role is filled by Ser-63. A Pyruvic acid (Ser); by autocatalysis modification is found at Ser-63. The Proton acceptor; for processing activity role is filled by His-68. Cys-83 functions as the Proton donor; for catalytic activity in the catalytic mechanism.

This sequence belongs to the prokaryotic AdoMetDC family. Type 1 subfamily. Heterotetramer of two alpha and two beta chains arranged as a dimer of alpha/beta heterodimers. Pyruvate is required as a cofactor. In terms of processing, is synthesized initially as an inactive proenzyme. Formation of the active enzyme involves a self-maturation process in which the active site pyruvoyl group is generated from an internal serine residue via an autocatalytic post-translational modification. Two non-identical subunits are generated from the proenzyme in this reaction, and the pyruvate is formed at the N-terminus of the alpha chain, which is derived from the carboxyl end of the proenzyme. The post-translation cleavage follows an unusual pathway, termed non-hydrolytic serinolysis, in which the side chain hydroxyl group of the serine supplies its oxygen atom to form the C-terminus of the beta chain, while the remainder of the serine residue undergoes an oxidative deamination to produce ammonia and the pyruvoyl group blocking the N-terminus of the alpha chain.

The catalysed reaction is S-adenosyl-L-methionine + H(+) = S-adenosyl 3-(methylsulfanyl)propylamine + CO2. It functions in the pathway amine and polyamine biosynthesis; S-adenosylmethioninamine biosynthesis; S-adenosylmethioninamine from S-adenosyl-L-methionine: step 1/1. Catalyzes the decarboxylation of S-adenosylmethionine to S-adenosylmethioninamine (dcAdoMet), the propylamine donor required for the synthesis of the polyamines spermine and spermidine from the diamine putrescine. The sequence is that of S-adenosylmethionine decarboxylase proenzyme from Carboxydothermus hydrogenoformans (strain ATCC BAA-161 / DSM 6008 / Z-2901).